A 633-amino-acid polypeptide reads, in one-letter code: Probable potassium transport system protein Kup 3 (633 aa).

11 helical membrane-spanning segments follow: residues 61–81 (LVSLVLWTLTAIVTIKYVLFL), 107–127 (PVLMFFAGVLGAALFIGDAMI), 143–163 (VAPALHDYVLPISVVIILLLF), 173–193 (VSVFFGPITLVWFLVMAAAGV), 211–231 (AIGFLWNAGLIGFIVLGAIFL), 255–275 (WFAVVFPALALNYLGQGALVL), 287–307 (LMFPNWALLPMVILATAGTII), 345–365 (IYLPLVNTILLTGVLALMLMF), 371–391 (LAPAYGVSITGAMVIDTILAF), 402–422 (ALTAIAVLLPLFSLELIFLGA), and 427–447 (IHHGGYVPILIAGTLIMMMWT).

It belongs to the HAK/KUP transporter (TC 2.A.72) family.

The protein localises to the cell inner membrane. The catalysed reaction is K(+)(in) + H(+)(in) = K(+)(out) + H(+)(out). Its function is as follows. Transport of potassium into the cell. Likely operates as a K(+):H(+) symporter. This Sinorhizobium medicae (strain WSM419) (Ensifer medicae) protein is Probable potassium transport system protein Kup 3.